The primary structure comprises 439 residues: Acetyl esterase Axe7A (439 aa).

Positions 1–31 are cleaved as a signal peptide; it reads MFNFAPKQTTEMKKLLFTLVFVLGSMATALA. The active-site Nucleophile is S309. Active-site charge relay system residues include D391 and H420.

This sequence belongs to the carbohydrate esterase 7 family.

It participates in glycan degradation; xylan degradation. Involved in degradation of plant cell wall polysaccharides. Has acetyl esterase activity towards a broad range of substrates including xylose-tetraacetate, 4-O-methylumbelliferyl acetate, glucose-pentaacetate, cephalosporin C, and acetylated xylo-oligosaccharides smaller than xylo-heptaose. Displays no detectable activity on polymeric acetylated xylan. The polypeptide is Acetyl esterase Axe7A (Xylanibacter ruminicola (strain ATCC 19189 / DSM 19721 / CIP 105475 / JCM 8958 / 23) (Prevotella ruminicola)).